Reading from the N-terminus, the 2339-residue chain is DNA-directed RNA polymerase III subunit RPC1 (2339 aa).

7 residues coordinate Zn(2+): C88, C91, C98, H101, C128, C131, and C175. 3 residues coordinate Mg(2+): D611, D613, and D615. A bridging helix region spans residues 955–967 (PTEFFFHTMSGRE). Disordered stretches follow at residues 1503 to 1557 (EKRK…NNYY) and 2038 to 2079 (LKSE…DSDR). The span at 1509-1520 (PKEEKENFDRNN) shows a compositional bias: basic and acidic residues. Residues 1521–1557 (YKMITDNNNNDNNNNNNDNNNNDNNNNNNNSNNNNYY) show a composition bias toward low complexity. A compositionally biased stretch (basic and acidic residues) spans 2038–2047 (LKSEKKKDIN). Over residues 2049–2059 (DNNNNDDNNNN) the composition is skewed to low complexity.

It belongs to the RNA polymerase beta' chain family. As to quaternary structure, component of the RNA polymerase III (Pol III) complex consisting of 17 subunits.

It localises to the nucleus. The enzyme catalyses RNA(n) + a ribonucleoside 5'-triphosphate = RNA(n+1) + diphosphate. Functionally, DNA-dependent RNA polymerase catalyzes the transcription of DNA into RNA using the four ribonucleoside triphosphates as substrates. Largest and catalytic core component of RNA polymerase III which synthesizes small RNAs, such as 5S rRNA and tRNAs. Forms the polymerase active center together with the second largest subunit. A single-stranded DNA template strand of the promoter is positioned within the central active site cleft of Pol III. A bridging helix emanates from RPC1 and crosses the cleft near the catalytic site and is thought to promote translocation of Pol III by acting as a ratchet that moves the RNA-DNA hybrid through the active site by switching from straight to bent conformations at each step of nucleotide addition. This Plasmodium falciparum protein is DNA-directed RNA polymerase III subunit RPC1.